Reading from the N-terminus, the 67-residue chain is Small ribosomal subunit protein eS17 (67 aa).

Belongs to the eukaryotic ribosomal protein eS17 family.

The chain is Small ribosomal subunit protein eS17 from Thermococcus gammatolerans (strain DSM 15229 / JCM 11827 / EJ3).